A 559-amino-acid polypeptide reads, in one-letter code: Urocanate hydratase (559 aa).

NAD(+) is bound by residues 53 to 54, glutamine 131, 177 to 179, glutamate 197, arginine 202, 243 to 244, 264 to 268, 274 to 275, and tyrosine 323; these read GG, GMG, NA, QTSAH, and YL. The active site involves cysteine 411. Residue glycine 493 coordinates NAD(+).

Belongs to the urocanase family. NAD(+) serves as cofactor.

It is found in the cytoplasm. It catalyses the reaction 4-imidazolone-5-propanoate = trans-urocanate + H2O. The protein operates within amino-acid degradation; L-histidine degradation into L-glutamate; N-formimidoyl-L-glutamate from L-histidine: step 2/3. Functionally, catalyzes the conversion of urocanate to 4-imidazolone-5-propionate. The polypeptide is Urocanate hydratase (Pseudomonas aeruginosa (strain ATCC 15692 / DSM 22644 / CIP 104116 / JCM 14847 / LMG 12228 / 1C / PRS 101 / PAO1)).